Reading from the N-terminus, the 310-residue chain is Homoserine kinase (310 aa).

91-101 (PIGSGLGSSAC) is a binding site for ATP.

Belongs to the GHMP kinase family. Homoserine kinase subfamily.

The protein localises to the cytoplasm. It catalyses the reaction L-homoserine + ATP = O-phospho-L-homoserine + ADP + H(+). It functions in the pathway amino-acid biosynthesis; L-threonine biosynthesis; L-threonine from L-aspartate: step 4/5. Functionally, catalyzes the ATP-dependent phosphorylation of L-homoserine to L-homoserine phosphate. This Shigella sonnei (strain Ss046) protein is Homoserine kinase.